The primary structure comprises 214 residues: Orotate phosphoribosyltransferase (214 aa).

Lys26 contacts 5-phospho-alpha-D-ribose 1-diphosphate. 34 to 35 (FF) serves as a coordination point for orotate. 5-phospho-alpha-D-ribose 1-diphosphate is bound by residues 72–73 (YK), Arg99, Lys100, Lys103, His105, and 124–132 (DDVITAGTA). Orotate contacts are provided by Thr128 and Arg157.

This sequence belongs to the purine/pyrimidine phosphoribosyltransferase family. PyrE subfamily. Homodimer. The cofactor is Mg(2+).

The enzyme catalyses orotidine 5'-phosphate + diphosphate = orotate + 5-phospho-alpha-D-ribose 1-diphosphate. The protein operates within pyrimidine metabolism; UMP biosynthesis via de novo pathway; UMP from orotate: step 1/2. Functionally, catalyzes the transfer of a ribosyl phosphate group from 5-phosphoribose 1-diphosphate to orotate, leading to the formation of orotidine monophosphate (OMP). The sequence is that of Orotate phosphoribosyltransferase from Pseudomonas fluorescens (strain ATCC BAA-477 / NRRL B-23932 / Pf-5).